Reading from the N-terminus, the 250-residue chain is Ribosomal RNA small subunit methyltransferase J (250 aa).

S-adenosyl-L-methionine is bound by residues 96–97 (RD) and D168.

This sequence belongs to the methyltransferase superfamily. RsmJ family.

It is found in the cytoplasm. It catalyses the reaction guanosine(1516) in 16S rRNA + S-adenosyl-L-methionine = N(2)-methylguanosine(1516) in 16S rRNA + S-adenosyl-L-homocysteine + H(+). Specifically methylates the guanosine in position 1516 of 16S rRNA. In Neisseria meningitidis serogroup B (strain ATCC BAA-335 / MC58), this protein is Ribosomal RNA small subunit methyltransferase J.